A 173-amino-acid polypeptide reads, in one-letter code: MTNTENYFKVGTIVNTHGIRGEVKIMAITDFAQDRFKKGADLFIDTKQGRIPVKVQSSRLHKNMWLVLFVGVTNINEIEKYKGDDVYIEGTARPELEDDQYYYDEIIDSTVVDLDGNKIGVVKEIMETGANDVWIVQRDGQSDALIPMIDDVVKSVDVDAKLITIDALEGLLD.

The PRC barrel domain maps to 98–171 (DDQYYYDEII…LITIDALEGL (74 aa)).

This sequence belongs to the RimM family. In terms of assembly, binds ribosomal protein uS19.

Its subcellular location is the cytoplasm. An accessory protein needed during the final step in the assembly of 30S ribosomal subunit, possibly for assembly of the head region. Essential for efficient processing of 16S rRNA. May be needed both before and after RbfA during the maturation of 16S rRNA. It has affinity for free ribosomal 30S subunits but not for 70S ribosomes. The polypeptide is Ribosome maturation factor RimM (Leuconostoc mesenteroides subsp. mesenteroides (strain ATCC 8293 / DSM 20343 / BCRC 11652 / CCM 1803 / JCM 6124 / NCDO 523 / NBRC 100496 / NCIMB 8023 / NCTC 12954 / NRRL B-1118 / 37Y)).